We begin with the raw amino-acid sequence, 447 residues long: Phosphoglucosamine mutase (447 aa).

S100 acts as the Phosphoserine intermediate in catalysis. S100, D240, D242, and D244 together coordinate Mg(2+). A Phosphoserine modification is found at S100.

The protein belongs to the phosphohexose mutase family. The cofactor is Mg(2+). In terms of processing, activated by phosphorylation.

It catalyses the reaction alpha-D-glucosamine 1-phosphate = D-glucosamine 6-phosphate. Functionally, catalyzes the conversion of glucosamine-6-phosphate to glucosamine-1-phosphate. This chain is Phosphoglucosamine mutase, found in Clostridium botulinum (strain Eklund 17B / Type B).